A 354-amino-acid polypeptide reads, in one-letter code: NAD-dependent epimerase/dehydratase ALT6 (354 aa).

Residues lysine 41 and tyrosine 174 each coordinate NADP(+).

This sequence belongs to the NAD(P)-dependent epimerase/dehydratase family. Dihydroflavonol-4-reductase subfamily.

It functions in the pathway mycotoxin biosynthesis. NAD-dependent epimerase/dehydratase; part of the gene cluster that mediates the biosynthesis of the host-selective toxins (HSTs) AAL-toxins, sphinganine-analog mycotoxins responsible for Alternaria stem canker on tomato by the tomato pathotype. The biosynthesis starts with the polyketide synthase ALT1-catalyzed C-16 carbon chain assembly from one starter acetyl-CoA unit with malonyl-CoA extender units. ALT1 also selectively transfers methyl groups at the first and the third cycle of chain elongation for AAL toxin. The C-16 polyketide chain is released from the enzyme by a nucleophilic attack of a carbanion, which is derived from R-carbon of glycin by decarboxylation, on the carbonyl carbon of polyketide acyl chain. This step is probably catalyzed by a pyridoxal 5'-phosphate-dependent aminoacyl transferase ALT4. The respective functions of the other enzymes encoded by the cluster have still to be elucidated. The sphingosine N-acyltransferase-like protein ALT7 seems not to act as a resistance/self-tolerance factor against the toxin in the toxin biosynthetic gene cluster, contrary to what is expected. In Alternaria alternata (Alternaria rot fungus), this protein is NAD-dependent epimerase/dehydratase ALT6.